An 816-amino-acid chain; its full sequence is MAMWQGAMDNRGFQQGSFSSFRSSSSDEDLMDIPGTAMDFSMRDDVPPLDREIEEDKSYNGGGIGSSNRIMDFLEEPIPGVGTYDDFNTIDWVREKSRDRDRHREITNKSKESTWALIHSVSDAFSGWLLMLLIGLFSGSLAGLIDISAHWMTDLKEGICTGGFWFNHEHCCWNSENVTFEDTDKCPEWNSWSQLIINTDEGAFAYIVNYFMYVLWALLFAFLAVSLVKVFAPYACGSGIPEIKTILSGFIIRGYLGKWTLVIKTITLVLAVSSGLSLGKEGPLVHVACCCGNILCHRFNKYRKNEAKRREVLSAAAAAGVSVAFGAPIGGVLFSLEEVSYYFPLKTLWRSFFAALVAAFTLRSINPFGNSRLVLFYVEFHTPWHLFELVPFILLGIFGGLWGALFIRTNIAWCRKRKTTQLGKYPVIEVLIVTAITAILAFPNEYTRMSTSELISELFNDCGLLDSSKLCDYENRFNTSKGADLPDRPAGVGVYNAMWQLALALILKIVITIFTFGMKIPSGLFIPSMAVGAIAGRLLGVGMEQLAYYHHDWTIFNSWCSQGADCITPGLYAMVGAAACLGGVTRMTVSLVVIMFELTGGLEYIVPLMAAAMTSKWVADALGREGIYDAHIRLNGYPFLEAKEEFAHKTLAMDVMKPRRNDPLLTVLTQDSMTVEDVETIISETTYSGFPVVVSRESQRLVGFVLRRDLIISIENARKKQDGVVSTSIIYFTEHSPPMPPYTPPTLKLRNILDLSPFTVTDLTPMEIVVDIFRKLGLRQCLVTHNGRLLGIITKKDVLKHIAQMANQDPDSILFN.

Residues 1–124 (MAMWQGAMDN…WALIHSVSDA (124 aa)) are Cytoplasmic-facing. The next 2 membrane-spanning stretches (helical) occupy residues 125-162 (FSGW…ICTG) and 208-231 (VNYF…VKVF). The Selectivity filter part_1 signature appears at 237-241 (GSGIP). Residue serine 238 coordinates chloride. Positions 240–247 (IPEIKTIL) form an intramembrane region, helical. 2 helical membrane-spanning segments follow: residues 256 to 275 (LGKW…VSSG) and 281 to 300 (EGPL…HRFN). A Selectivity filter part_2 motif is present at residues 279–283 (GKEGP). 2 consecutive intramembrane regions (helical) follow at residues 312–324 (VLSA…VSVA) and 328–336 (PIGGVLFSL). A run of 5 helical transmembrane segments spans residues 348 to 366 (LWRS…RSIN), 389 to 414 (LVPF…IAWC), 422 to 442 (LGKY…ILAF), 498 to 518 (MWQL…TFGM), and 523 to 542 (GLFI…LGVG). Residues 523 to 527 (GLFIP) carry the Selectivity filter part_3 motif. Position 525 (phenylalanine 525) interacts with chloride. The segment at residues 570 to 584 (GLYAMVGAAACLGGV) is an intramembrane region (helical). The segment at residues 585 to 587 (TRM) is an intramembrane region (note=Loop between two helices). The segment at residues 588 to 599 (TVSLVVIMFELT) is an intramembrane region (helical). An intramembrane region (note=Loop between two helices) is located at residues 600 to 604 (GGLEY). A helical membrane pass occupies residues 605–622 (IVPLMAAAMTSKWVADAL). Over 623 to 816 (GREGIYDAHI…NQDPDSILFN (194 aa)) the chain is Cytoplasmic. Tyrosine 628 is a chloride binding site. CBS domains lie at 656 to 720 (MKPR…ARKK) and 752 to 812 (ILDL…DPDS). ATP is bound by residues threonine 666, 687 to 689 (YSG), and 794 to 797 (TKKD).

This sequence belongs to the chloride channel (TC 2.A.49) family. ClC-5/CLCN5 subfamily. In terms of assembly, interacts with NEDD4 and NEDD4L. Post-translationally, ubiquitinated by NEDD4L in the presence of albumin; which promotes endocytosis and proteasomal degradation.

The protein localises to the golgi apparatus membrane. The protein resides in the endosome membrane. It is found in the cell membrane. The enzyme catalyses 2 chloride(in) + H(+)(out) = 2 chloride(out) + H(+)(in). In terms of biological role, proton-coupled chloride transporter. Functions as antiport system and exchanges chloride ions against protons. Important for normal acidification of the endosome lumen. May play an important role in renal tubular function. The CLC channel family contains both chloride channels and proton-coupled anion transporters that exchange chloride or another anion for protons. The absence of conserved gating glutamate residues is typical for family members that function as channels. The chain is H(+)/Cl(-) exchange transporter 5 (CLCN5) from Oryctolagus cuniculus (Rabbit).